The sequence spans 367 residues: Probable trehalose-phosphate phosphatase 4 (367 aa).

Belongs to the trehalose phosphatase family. It depends on a divalent metal cation as a cofactor.

The catalysed reaction is alpha,alpha-trehalose 6-phosphate + H2O = alpha,alpha-trehalose + phosphate. Its pathway is glycan biosynthesis; trehalose biosynthesis. Its function is as follows. Removes the phosphate from trehalose 6-phosphate to produce free trehalose. Trehalose accumulation in plant may improve abiotic stress tolerance. The chain is Probable trehalose-phosphate phosphatase 4 (TPP4) from Oryza sativa subsp. japonica (Rice).